The following is a 415-amino-acid chain: Mitochondrial tRNA-specific 2-thiouridylase 1 (415 aa).

ATP contacts are provided by residues 37–44 (AMSGGVDS) and methionine 63. Residues 124–126 (NPD) are interaction with target base in tRNA. The active-site Nucleophile is cysteine 129. Cysteines 129 and 234 form a disulfide. Residue glycine 159 participates in ATP binding. The interval 183–185 (KDQ) is interaction with tRNA. Catalysis depends on cysteine 234, which acts as the Cysteine persulfide intermediate. An interaction with tRNA region spans residues 356 to 357 (RH).

Belongs to the MnmA/TRMU family.

The protein localises to the mitochondrion. It catalyses the reaction 5-taurinomethyluridine(34) in tRNA + S-sulfanyl-L-cysteinyl-[protein] + AH2 + ATP = 5-taurinomethyl-2-thiouridine(34) in tRNA + L-cysteinyl-[protein] + A + AMP + diphosphate + H(+). Catalyzes the 2-thiolation of uridine at the wobble position (U34) of mitochondrial tRNA(Lys), tRNA(Glu) and tRNA(Gln). Required for the formation of 5-taurinomethyl-2-thiouridine (tm5s2U) of mitochondrial tRNA(Lys), tRNA(Glu), and tRNA(Gln) at the wobble position. ATP is required to activate the C2 atom of the wobble base. This Schizosaccharomyces pombe (strain 972 / ATCC 24843) (Fission yeast) protein is Mitochondrial tRNA-specific 2-thiouridylase 1.